The chain runs to 124 residues: Large ribosomal subunit protein uL22 (124 aa).

Belongs to the universal ribosomal protein uL22 family. As to quaternary structure, part of the 50S ribosomal subunit.

In terms of biological role, this protein binds specifically to 23S rRNA; its binding is stimulated by other ribosomal proteins, e.g. L4, L17, and L20. It is important during the early stages of 50S assembly. It makes multiple contacts with different domains of the 23S rRNA in the assembled 50S subunit and ribosome. Its function is as follows. The globular domain of the protein is located near the polypeptide exit tunnel on the outside of the subunit, while an extended beta-hairpin is found that lines the wall of the exit tunnel in the center of the 70S ribosome. The chain is Large ribosomal subunit protein uL22 from Campylobacter lari (strain RM2100 / D67 / ATCC BAA-1060).